We begin with the raw amino-acid sequence, 679 residues long: UvrABC system protein B (679 aa).

In terms of domain architecture, Helicase ATP-binding spans 25–412; sequence EGVNQGQRYQ…DGHLAEQVIR (388 aa). Position 38–45 (38–45) interacts with ATP; it reads GATGTGKT. Residues 91 to 114 carry the Beta-hairpin motif; sequence YYDYYQPEAYVPVSDTYIAKTSSI. The Helicase C-terminal domain occupies 429–591; that stretch reads QVDDLLAEIR…IVPRPAGKRA (163 aa). A UVR domain is found at 639-674; the sequence is PELIDQLETKMKEAAKNLNFEEAASLRDRIKKFRQK.

Belongs to the UvrB family. In terms of assembly, forms a heterotetramer with UvrA during the search for lesions. Interacts with UvrC in an incision complex.

It localises to the cytoplasm. Functionally, the UvrABC repair system catalyzes the recognition and processing of DNA lesions. A damage recognition complex composed of 2 UvrA and 2 UvrB subunits scans DNA for abnormalities. Upon binding of the UvrA(2)B(2) complex to a putative damaged site, the DNA wraps around one UvrB monomer. DNA wrap is dependent on ATP binding by UvrB and probably causes local melting of the DNA helix, facilitating insertion of UvrB beta-hairpin between the DNA strands. Then UvrB probes one DNA strand for the presence of a lesion. If a lesion is found the UvrA subunits dissociate and the UvrB-DNA preincision complex is formed. This complex is subsequently bound by UvrC and the second UvrB is released. If no lesion is found, the DNA wraps around the other UvrB subunit that will check the other stand for damage. In Prochlorococcus marinus (strain MIT 9313), this protein is UvrABC system protein B.